A 198-amino-acid chain; its full sequence is Ribonuclease HII (198 aa).

One can recognise an RNase H type-2 domain in the interval 11–198 (TCIAGVDEVG…APVKRALGLA (188 aa)). Residues Asp-17, Glu-18, and Asp-109 each coordinate a divalent metal cation.

Belongs to the RNase HII family. The cofactor is Mn(2+). Mg(2+) is required as a cofactor.

It is found in the cytoplasm. The catalysed reaction is Endonucleolytic cleavage to 5'-phosphomonoester.. Functionally, endonuclease that specifically degrades the RNA of RNA-DNA hybrids. The polypeptide is Ribonuclease HII (Pectobacterium carotovorum subsp. carotovorum (strain PC1)).